The chain runs to 94 residues: UPF0213 protein BH0048 (94 aa).

Residues 1–76 (MNHYVYILEC…KHLSRRKKEQ (76 aa)) form the GIY-YIG domain.

The protein belongs to the UPF0213 family.

This chain is UPF0213 protein BH0048, found in Halalkalibacterium halodurans (strain ATCC BAA-125 / DSM 18197 / FERM 7344 / JCM 9153 / C-125) (Bacillus halodurans).